A 721-amino-acid chain; its full sequence is 1,4-alpha-glucan branching enzyme GlgB (721 aa).

Catalysis depends on Asp-404, which acts as the Nucleophile. Glu-457 functions as the Proton donor in the catalytic mechanism.

This sequence belongs to the glycosyl hydrolase 13 family. GlgB subfamily. As to quaternary structure, monomer.

The catalysed reaction is Transfers a segment of a (1-&gt;4)-alpha-D-glucan chain to a primary hydroxy group in a similar glucan chain.. It functions in the pathway glycan biosynthesis; glycogen biosynthesis. In terms of biological role, catalyzes the formation of the alpha-1,6-glucosidic linkages in glycogen by scission of a 1,4-alpha-linked oligosaccharide from growing alpha-1,4-glucan chains and the subsequent attachment of the oligosaccharide to the alpha-1,6 position. The chain is 1,4-alpha-glucan branching enzyme GlgB from Novosphingobium aromaticivorans (strain ATCC 700278 / DSM 12444 / CCUG 56034 / CIP 105152 / NBRC 16084 / F199).